A 358-amino-acid chain; its full sequence is GTPase Obg (358 aa).

The Obg domain maps to Met1 to Ile159. One can recognise an OBG-type G domain in the interval Ala160–Gly327. GTP-binding positions include Gly166–Ser173, Phe191–His195, Asp212–Gly215, Asn279–Asp282, and Ser308–Val310. 2 residues coordinate Mg(2+): Ser173 and Thr193. The disordered stretch occupies residues Ala335–Pro358.

Belongs to the TRAFAC class OBG-HflX-like GTPase superfamily. OBG GTPase family. Monomer. The cofactor is Mg(2+).

The protein localises to the cytoplasm. In terms of biological role, an essential GTPase which binds GTP, GDP and possibly (p)ppGpp with moderate affinity, with high nucleotide exchange rates and a fairly low GTP hydrolysis rate. Plays a role in control of the cell cycle, stress response, ribosome biogenesis and in those bacteria that undergo differentiation, in morphogenesis control. This Nitrobacter winogradskyi (strain ATCC 25391 / DSM 10237 / CIP 104748 / NCIMB 11846 / Nb-255) protein is GTPase Obg.